Here is a 2282-residue protein sequence, read N- to C-terminus: Ectopic P granules protein 5 homolog (2282 aa).

This sequence belongs to the EPG5 family.

Its function is as follows. Involved in autophagy. This is Ectopic P granules protein 5 homolog from Aedes aegypti (Yellowfever mosquito).